Consider the following 399-residue polypeptide: Zinc finger TRAF-type-containing protein 1 (399 aa).

The span at 1 to 13 shows a compositional bias: gly residues; it reads MSGAEEAGGGGPA. Positions 1-20 are disordered; sequence MSGAEEAGGGGPAAGPAGAV. Residues 106-151 form an RING-type; degenerate zinc finger; that stretch reads CTVCLDLPKASVYQCTNGHLMCAGCFIHLLADARLKEEQATCPNCR. The TRAF-type zinc-finger motif lies at 152-210; sequence CEISKSLCCRNLAVEKAVSELPSECGFCLRQFPRSLLERHQKEECQDRVTQCKYKRIGC.

It belongs to the ZFTRAF1 family. Interacts with LGALS3.

It is found in the cytoplasm. It localises to the perinuclear region. The chain is Zinc finger TRAF-type-containing protein 1 from Rattus norvegicus (Rat).